Consider the following 424-residue polypeptide: Serine--tRNA ligase (424 aa).

231–233 (TAE) contributes to the L-serine binding site. Residue 262 to 264 (RSE) participates in ATP binding. Position 285 (Glu285) interacts with L-serine. Residue 349-352 (EISS) participates in ATP binding. Residue Ser385 participates in L-serine binding.

It belongs to the class-II aminoacyl-tRNA synthetase family. Type-1 seryl-tRNA synthetase subfamily. In terms of assembly, homodimer. The tRNA molecule binds across the dimer.

The protein resides in the cytoplasm. It carries out the reaction tRNA(Ser) + L-serine + ATP = L-seryl-tRNA(Ser) + AMP + diphosphate + H(+). The enzyme catalyses tRNA(Sec) + L-serine + ATP = L-seryl-tRNA(Sec) + AMP + diphosphate + H(+). It functions in the pathway aminoacyl-tRNA biosynthesis; selenocysteinyl-tRNA(Sec) biosynthesis; L-seryl-tRNA(Sec) from L-serine and tRNA(Sec): step 1/1. Functionally, catalyzes the attachment of serine to tRNA(Ser). Is also able to aminoacylate tRNA(Sec) with serine, to form the misacylated tRNA L-seryl-tRNA(Sec), which will be further converted into selenocysteinyl-tRNA(Sec). In Marinobacter nauticus (strain ATCC 700491 / DSM 11845 / VT8) (Marinobacter aquaeolei), this protein is Serine--tRNA ligase.